A 190-amino-acid chain; its full sequence is Glutathione peroxidase 2 (190 aa).

The active site involves Sec40. Sec40 is a non-standard amino acid (selenocysteine).

The protein belongs to the glutathione peroxidase family. Homotetramer. In terms of tissue distribution, mostly in liver and gastrointestinal tract, not found in heart or kidney.

The protein localises to the cytoplasm. Its subcellular location is the cytosol. The catalysed reaction is 2 glutathione + H2O2 = glutathione disulfide + 2 H2O. It catalyses the reaction a hydroperoxy polyunsaturated fatty acid + 2 glutathione = a hydroxy polyunsaturated fatty acid + glutathione disulfide + H2O. It carries out the reaction tert-butyl hydroperoxide + 2 glutathione = tert-butanol + glutathione disulfide + H2O. The enzyme catalyses cumene hydroperoxide + 2 glutathione = 2-phenylpropan-2-ol + glutathione disulfide + H2O. The catalysed reaction is (13S)-hydroperoxy-(9Z,11E)-octadecadienoate + 2 glutathione = (13S)-hydroxy-(9Z,11E)-octadecadienoate + glutathione disulfide + H2O. It catalyses the reaction (5S)-hydroperoxy-(6E,8Z,11Z,14Z)-eicosatetraenoate + 2 glutathione = (5S)-hydroxy-(6E,8Z,11Z,14Z)-eicosatetraenoate + glutathione disulfide + H2O. It carries out the reaction (12R)-hydroperoxy-(5Z,8Z,10E,14Z)-eicosatetraenoate + 2 glutathione = (12R)-hydroxy-(5Z,8Z,10E,14Z)-eicosatetraenoate + glutathione disulfide + H2O. The enzyme catalyses (15S)-hydroperoxy-(5Z,8Z,11Z,13E)-eicosatetraenoate + 2 glutathione = (15S)-hydroxy-(5Z,8Z,11Z,13E)-eicosatetraenoate + glutathione disulfide + H2O. Functionally, catalyzes the reduction of hydroperoxides in a glutathione-dependent manner thus regulating cellular redox homeostasis. Can reduce small soluble hydroperoxides such as H2O2, cumene hydroperoxide and tert-butyl hydroperoxide, as well as several fatty acid-derived hydroperoxides. Cannot reduce phosphatidycholine hydroperoxide. This chain is Glutathione peroxidase 2, found in Homo sapiens (Human).